A 197-amino-acid chain; its full sequence is MIMRQASVQRSTSETDISVEIDLDGGGQAVVETSIPFFDHMLTLFSRHGLFNLTVKGRGDTEIDDHHLVEDMGICLGKVVKDAMGDKTGMVRYGSATIPMDETLCAVTLDVSGRPYLVYHVAFSAGARAGEFDLQLIREFFKAFSDHSGITLHINLFYGENNHHIAEAVFKAFARALSMAVSIDSRIQGVLSTKGCL.

Belongs to the imidazoleglycerol-phosphate dehydratase family.

It localises to the cytoplasm. It carries out the reaction D-erythro-1-(imidazol-4-yl)glycerol 3-phosphate = 3-(imidazol-4-yl)-2-oxopropyl phosphate + H2O. It functions in the pathway amino-acid biosynthesis; L-histidine biosynthesis; L-histidine from 5-phospho-alpha-D-ribose 1-diphosphate: step 6/9. The polypeptide is Imidazoleglycerol-phosphate dehydratase (Syntrophus aciditrophicus (strain SB)).